The primary structure comprises 257 residues: MHVLRQQLTLFFIAMGFFTRIPMPTWVKVDGESLNKANRYFGLIGLLVGGICALVYEITRGFLPVSVSIIFAMIAGLVVTGGFHEDGLADTADGLGGGWSVADKLKIMKDSRIGTYGALALVMGLMLKFILLSELALYNPDLVVTALIVGHTLSRVMAASLIFSQSYVRDDDSSKSKPLAQNQTVNELLILLATAVLVLWCSGLSGGLYIAIGLVLLRWGLIYLFHRQIGGYTGDTLGATQQLAELACYLMLLGFSL.

6 consecutive transmembrane segments (helical) span residues 7-27 (QLTL…PTWV), 39-59 (RYFG…YEIT), 61-81 (GFLP…VVTG), 113-133 (IGTY…ILLS), 143-163 (VVTA…SLIF), and 196-216 (VLVL…GLVL).

Belongs to the CobS family. The cofactor is Mg(2+).

Its subcellular location is the cell inner membrane. The enzyme catalyses alpha-ribazole + adenosylcob(III)inamide-GDP = adenosylcob(III)alamin + GMP + H(+). It carries out the reaction alpha-ribazole 5'-phosphate + adenosylcob(III)inamide-GDP = adenosylcob(III)alamin 5'-phosphate + GMP + H(+). It functions in the pathway cofactor biosynthesis; adenosylcobalamin biosynthesis; adenosylcobalamin from cob(II)yrinate a,c-diamide: step 7/7. Functionally, joins adenosylcobinamide-GDP and alpha-ribazole to generate adenosylcobalamin (Ado-cobalamin). Also synthesizes adenosylcobalamin 5'-phosphate from adenosylcobinamide-GDP and alpha-ribazole 5'-phosphate. This is Adenosylcobinamide-GDP ribazoletransferase from Shewanella woodyi (strain ATCC 51908 / MS32).